The chain runs to 272 residues: Shikimate dehydrogenase (NADP(+)) (272 aa).

Shikimate is bound by residues 14–16 (SKS) and Thr61. Lys65 serves as the catalytic Proton acceptor. Residue Glu77 coordinates NADP(+). Residues Asn86 and Asp102 each contribute to the shikimate site. NADP(+)-binding positions include 126 to 130 (GAGGA), 149 to 154 (NRTVSR), and Met213. Tyr215 serves as a coordination point for shikimate. Gly237 contacts NADP(+).

It belongs to the shikimate dehydrogenase family. As to quaternary structure, homodimer.

The enzyme catalyses shikimate + NADP(+) = 3-dehydroshikimate + NADPH + H(+). It participates in metabolic intermediate biosynthesis; chorismate biosynthesis; chorismate from D-erythrose 4-phosphate and phosphoenolpyruvate: step 4/7. Involved in the biosynthesis of the chorismate, which leads to the biosynthesis of aromatic amino acids. Catalyzes the reversible NADPH linked reduction of 3-dehydroshikimate (DHSA) to yield shikimate (SA). This is Shikimate dehydrogenase (NADP(+)) from Shigella flexneri serotype 5b (strain 8401).